The following is a 201-amino-acid chain: Putative lipoprotein LppC (201 aa).

A signal peptide spans 1–23 (MTSTLHRTPLATAGLALVVALGG). Cys-24 carries N-palmitoyl cysteine lipidation. Residue Cys-24 is the site of S-diacylglycerol cysteine attachment. 3 prevents bacterial uptake by a human macrophage-like cell line regions span residues 77–96 (GANV…AELA), 97–116 (LVVD…IVTG), and 117–136 (IAPG…GHSV). Positions 122–141 (GSTADGQTPAGGHSVPNSGG) are disordered.

The protein belongs to the UPF0098 family.

The protein localises to the cell membrane. Its subcellular location is the cell surface. In terms of biological role, probably involved in bacterial recognition and uptake by its host (human). The chain is Putative lipoprotein LppC from Mycobacterium tuberculosis (strain ATCC 25618 / H37Rv).